We begin with the raw amino-acid sequence, 147 residues long: Prefoldin subunit alpha (147 aa).

The protein belongs to the prefoldin subunit alpha family. As to quaternary structure, heterohexamer of two alpha and four beta subunits.

It is found in the cytoplasm. Functionally, molecular chaperone capable of stabilizing a range of proteins. Seems to fulfill an ATP-independent, HSP70-like function in archaeal de novo protein folding. The polypeptide is Prefoldin subunit alpha (pfdA) (Saccharolobus solfataricus (strain ATCC 35092 / DSM 1617 / JCM 11322 / P2) (Sulfolobus solfataricus)).